The chain runs to 318 residues: MVQFGSRANTNMTGLPTEQAVEDRRVGNPKRDRMRNALVIVLGEFCGTFMFLLLSFIGAQTALVTNSPSDAGSPLLPFSLMYIAASFGTALAVNVWIFYRVSGGMFNPAVTLGLVLVGAVTPIHALLIIPTQLVAAITAAGITDALLPGKLLVTNALGNGTSVAQGVFIEMFLTSQLVLTVYFLAVEKHRSTHLAPIGIGISVFIAHICATNWTGTSINPARSFGPSVVAGFHGYDWIYYIGPFMGSLLAFGCYKIFKVLEYQTANPGQDDDNLDRSGHHHFFGHRKEPMPHTHTDNIEPKDHGVPQRNDSVIDDQMV.

Residues 1 to 16 (MVQFGSRANTNMTGLP) are compositionally biased toward polar residues. The tract at residues 1–27 (MVQFGSRANTNMTGLPTEQAVEDRRVG) is disordered. Residues 1–36 (MVQFGSRANTNMTGLPTEQAVEDRRVGNPKRDRMRN) lie on the Cytoplasmic side of the membrane. Residues 37–57 (ALVIVLGEFCGTFMFLLLSFI) traverse the membrane as a helical segment. Topologically, residues 58 to 77 (GAQTALVTNSPSDAGSPLLP) are extracellular. Residues 78–98 (FSLMYIAASFGTALAVNVWIF) traverse the membrane as a helical segment. The Cytoplasmic segment spans residues 99–108 (YRVSGGMFNP). An NPA 1 motif is present at residues 107–109 (NPA). Residues 109-129 (AVTLGLVLVGAVTPIHALLII) form a helical membrane-spanning segment. Over 130 to 165 (PTQLVAAITAAGITDALLPGKLLVTNALGNGTSVAQ) the chain is Extracellular. Asn159 is a glycosylation site (N-linked (GlcNAc...) asparagine). A helical transmembrane segment spans residues 166–186 (GVFIEMFLTSQLVLTVYFLAV). The Cytoplasmic segment spans residues 187 to 193 (EKHRSTH). A helical membrane pass occupies residues 194-214 (LAPIGIGISVFIAHICATNWT). The Extracellular portion of the chain corresponds to 215-236 (GTSINPARSFGPSVVAGFHGYD). An NPA 2 motif is present at residues 219–221 (NPA). A helical transmembrane segment spans residues 237–257 (WIYYIGPFMGSLLAFGCYKIF). Topologically, residues 258-318 (KVLEYQTANP…NDSVIDDQMV (61 aa)) are cytoplasmic. Positions 268-318 (GQDDDNLDRSGHHHFFGHRKEPMPHTHTDNIEPKDHGVPQRNDSVIDDQMV) are disordered. Over residues 285–305 (HRKEPMPHTHTDNIEPKDHGV) the composition is skewed to basic and acidic residues.

Belongs to the MIP/aquaporin (TC 1.A.8) family.

Its subcellular location is the nucleus membrane. The catalysed reaction is H2O(in) = H2O(out). Its function is as follows. Probable water channel involved in responses to changes in environmental conditions and conidiation. Involved in responses to hyperosmotic conditions, oxidative stress and cell wall destabilization. Also required for proper transcriptional activation of genes involved in aurofusarin biosynthesis. Not involved in pathogenicity, but negatively regulates deoxynivalenol (DON) production. This Gibberella zeae (strain ATCC MYA-4620 / CBS 123657 / FGSC 9075 / NRRL 31084 / PH-1) (Wheat head blight fungus) protein is Aquaporin-1.